A 341-amino-acid chain; its full sequence is Putative gustatory receptor 9a (341 aa).

Met-1 is a topological domain (cytoplasmic). Residues 2-22 traverse the membrane as a helical segment; the sequence is SLWLEHFLTGYFQLCGLVCGW. Topologically, residues 23–30 are extracellular; sequence SGSRLGRL. A helical membrane pass occupies residues 31 to 51; that stretch reads LSSTFLVLILIELVGEIETYF. Residues 52–68 are Cytoplasmic-facing; sequence TEENPDNESVPAYFAKV. A helical membrane pass occupies residues 69–89; the sequence is IMGVNMAYKMIHAWIALSALF. Topologically, residues 90–113 are extracellular; it reads ECRRFRYLLEELPPVKATSFIYRH. The chain crosses the membrane as a helical span at residues 114–134; sequence LILEIILFACNAFLVLSEYTI. Residues 135–202 are Cytoplasmic-facing; that stretch reads RGIYLENLRY…LAKVTRSLSH (68 aa). A helical transmembrane segment spans residues 203–223; sequence LFGLSLLLLNVLCLGDWIIVC. Topologically, residues 224 to 233 are extracellular; that stretch reads NVYFMVAYLQ. The helical transmembrane segment at 234–254 threads the bilayer; that stretch reads VLPATLFLFGQVMFVVCPTLI. The Cytoplasmic portion of the chain corresponds to 255 to 318; sequence KIWSICAASH…GIYHLNLQTL (64 aa). Residues 319 to 339 traverse the membrane as a helical segment; it reads AGMFFFILEALVIFLQFVSLV. The Extracellular segment spans residues 340-341; it reads RT.

Belongs to the insect chemoreceptor superfamily. Gustatory receptor (GR) family. Gr2a subfamily. As to expression, expressed in neurons of the terminal external chemosensory organ of larvae.

It localises to the cell membrane. In terms of biological role, probable gustatory receptor which mediates acceptance or avoidance behavior, depending on its substrates. The sequence is that of Putative gustatory receptor 9a (Gr9a) from Drosophila melanogaster (Fruit fly).